The sequence spans 343 residues: Ribosomal RNA small subunit methyltransferase C (343 aa).

The protein belongs to the methyltransferase superfamily. RsmC family. Monomer.

It is found in the cytoplasm. It carries out the reaction guanosine(1207) in 16S rRNA + S-adenosyl-L-methionine = N(2)-methylguanosine(1207) in 16S rRNA + S-adenosyl-L-homocysteine + H(+). Its function is as follows. Specifically methylates the guanine in position 1207 of 16S rRNA in the 30S particle. In Escherichia coli O6:K15:H31 (strain 536 / UPEC), this protein is Ribosomal RNA small subunit methyltransferase C.